Here is a 578-residue protein sequence, read N- to C-terminus: Raftlin (578 aa).

G2 is lipidated: N-myristoyl glycine. Residue C3 is the site of S-palmitoyl cysteine attachment. Residues 169 to 184 show a composition bias toward polar residues; the sequence is VNSAGSSAPVSTANST. Disordered stretches follow at residues 169–271, 449–525, and 551–578; these read VNSA…VHEE, FSRE…PGGL, and CTGH…VEEN. A phosphoserine mark is found at S183, S199, and S220. The span at 185–206 shows a compositional bias: basic and acidic residues; it reads EDARDAKNARGDHASLENEKPG. Positions 457-466 are enriched in basic residues; the sequence is RQMRKSKGKL. Basic and acidic residues predominate over residues 467–485; it reads SARDKQQAEENEKNLEDQS. A Phosphoserine modification is found at S505. Basic and acidic residues-rich tracts occupy residues 506-518 and 557-578; these read EEMK…DKGE and PGED…VEEN.

The protein belongs to the raftlin family. As to quaternary structure, interacts with TLR4; the interaction occurs in response to lipopolysaccharide stimulation. Interacts with CLTC; the interaction occurs in response to pathogens. Interacts with AP2A1 and AP2B1. Expressed in B-cells (at protein level). Expressed in dendritic cells and macrophages.

It localises to the cell membrane. It is found in the cytoplasm. The protein localises to the membrane raft. Its subcellular location is the endosome. The protein resides in the early endosome. Its function is as follows. Involved in protein trafficking via association with clathrin and AP2 complex. Upon bacterial lipopolysaccharide stimulation, mediates internalization of TLR4 to endosomes in dendritic cells and macrophages; and internalization of poly(I:C) to TLR3-positive endosomes in myeloid dendritic cells and epithelial cells; resulting in activation of TICAM1-mediated signaling and subsequent IFNB1 production. Involved in T-cell antigen receptor-mediated signaling by regulating tyrosine kinase LCK localization, T-cell dependent antibody production and cytokine secretion. May regulate B-cell antigen receptor-mediated signaling. May play a pivotal role in the formation and/or maintenance of lipid rafts. In Homo sapiens (Human), this protein is Raftlin (RFTN1).